Consider the following 193-residue polypeptide: Superoxide dismutase [Fe] (193 aa).

Fe cation is bound by residues H27, H74, D157, and H161.

Belongs to the iron/manganese superoxide dismutase family. As to quaternary structure, homodimer. Requires Fe cation as cofactor.

The catalysed reaction is 2 superoxide + 2 H(+) = H2O2 + O2. Destroys superoxide anion radicals which are normally produced within the cells and which are toxic to biological systems. The chain is Superoxide dismutase [Fe] (sodB) from Coxiella burnetii (strain RSA 493 / Nine Mile phase I).